The primary structure comprises 219 residues: Transmembrane protein 179B (219 aa).

Helical transmembrane passes span 6–26 (PLLL…ITAA), 69–89 (ISVC…YIAF), 105–125 (LGLS…LKIG), and 167–187 (AETA…LVLI). A disordered region spans residues 195–219 (IRPGTEDPSAPPSETEPFFNRPGRP).

The protein belongs to the TMEM179 family.

The protein resides in the membrane. This chain is Transmembrane protein 179B (tmem179b), found in Danio rerio (Zebrafish).